A 237-amino-acid polypeptide reads, in one-letter code: Zinc finger protein 22 (237 aa).

Residues 1 to 33 form a disordered region; it reads MRLGKPKGGISRSASQGKTYESKRKTARQRQKW. Lys-18 and Lys-23 each carry N6-acetyllysine. 5 consecutive C2H2-type zinc fingers follow at residues 55-82, 83-110, 111-138, 139-166, and 167-194; these read YKCTKCSKSFSQSSTLFQHKKIHTGKKS, HKCADCGKSFFQSSNLIQHRRIHTGEKP, YKCDECGERFKQSSNLIQHQRIHTGEKP, YCCDECGRCFSQSSHLIQHQRTHTGEKP, and YQCEECDKCFSQSSHLRQHMKVHKEKKS. Over residues 188-217 the composition is skewed to basic residues; that stretch reads VHKEKKSHKRGKNARAKTHPVSWKRGKGRK. The disordered stretch occupies residues 188-218; the sequence is VHKEKKSHKRGKNARAKTHPVSWKRGKGRKA.

This sequence belongs to the krueppel C2H2-type zinc-finger protein family. In terms of tissue distribution, highly expressed in the ameloblast layer of mandibular incisors, moderately expressed in submandibular gland, calvaria, kidney and lung, and expressed at low levels in brain and thymus.

It is found in the nucleus. Binds DNA through the consensus sequence 5'-CAATG-3'. May be involved in transcriptional regulation and may play a role in tooth formation. The protein is Zinc finger protein 22 (Znf22) of Rattus norvegicus (Rat).